A 351-amino-acid chain; its full sequence is Biotin synthase (351 aa).

The region spanning 44-262 (NRVQVSTLLS…LAVARILMPQ (219 aa)) is the Radical SAM core domain. [4Fe-4S] cluster is bound by residues cysteine 59, cysteine 63, and cysteine 66. [2Fe-2S] cluster contacts are provided by cysteine 103, cysteine 134, cysteine 194, and arginine 266.

This sequence belongs to the radical SAM superfamily. Biotin synthase family. Homodimer. Requires [4Fe-4S] cluster as cofactor. The cofactor is [2Fe-2S] cluster.

It carries out the reaction (4R,5S)-dethiobiotin + (sulfur carrier)-SH + 2 reduced [2Fe-2S]-[ferredoxin] + 2 S-adenosyl-L-methionine = (sulfur carrier)-H + biotin + 2 5'-deoxyadenosine + 2 L-methionine + 2 oxidized [2Fe-2S]-[ferredoxin]. It participates in cofactor biosynthesis; biotin biosynthesis; biotin from 7,8-diaminononanoate: step 2/2. Catalyzes the conversion of dethiobiotin (DTB) to biotin by the insertion of a sulfur atom into dethiobiotin via a radical-based mechanism. This is Biotin synthase from Pseudomonas fluorescens (strain ATCC BAA-477 / NRRL B-23932 / Pf-5).